Here is a 150-residue protein sequence, read N- to C-terminus: MKPSDWLILQKKVRFGDCDSAGVIHFHNLLKWSHEAWEESIEIYGIPYQDIFPDFSIRKSQIIFPIVNCEANYLAPIKIGDLLKVKIYPHKINPHLFRVNSFFMKNGNKVAEGKIIHCSLDVDSRNKIELPDQLERWIEASNISTNLKEC.

Residue Asp19 is part of the active site.

Belongs to the 4-hydroxybenzoyl-CoA thioesterase family. DHNA-CoA hydrolase subfamily.

The catalysed reaction is 1,4-dihydroxy-2-naphthoyl-CoA + H2O = 1,4-dihydroxy-2-naphthoate + CoA + H(+). It functions in the pathway cofactor biosynthesis; phylloquinone biosynthesis. It participates in quinol/quinone metabolism; 1,4-dihydroxy-2-naphthoate biosynthesis; 1,4-dihydroxy-2-naphthoate from chorismate: step 7/7. Catalyzes the hydrolysis of 1,4-dihydroxy-2-naphthoyl-CoA (DHNA-CoA) to 1,4-dihydroxy-2-naphthoate (DHNA), a reaction involved in phylloquinone (vitamin K1) biosynthesis. The chain is 1,4-dihydroxy-2-naphthoyl-CoA hydrolase from Prochlorococcus marinus (strain MIT 9312).